We begin with the raw amino-acid sequence, 503 residues long: Cytosolic carboxypeptidase 6 (503 aa).

The Peptidase M14 domain maps to 167 to 438 (YPYTYTRFQH…NVARTFLDYY (272 aa)). Zn(2+)-binding residues include histidine 230, glutamate 233, and histidine 328. Glutamate 401 (proton donor/acceptor) is an active-site residue. Composition is skewed to basic and acidic residues over residues 459–469 (IEVQRRKEKSP) and 487–503 (KGDK…STPF). The disordered stretch occupies residues 459-503 (IEVQRRKEKSPPYKHPLLRGPASNYPNSKGDKKSSVNHKDPSTPF).

It belongs to the peptidase M14 family. In terms of assembly, interacts with MYLK. The cofactor is Zn(2+).

It localises to the cytoplasm. Its subcellular location is the cytosol. It is found in the cytoskeleton. The protein localises to the microtubule organizing center. The protein resides in the centrosome. It localises to the centriole. Its subcellular location is the golgi apparatus. It is found in the cilium basal body. The enzyme catalyses (L-glutamyl)(n+1)-gamma-L-glutamyl-L-glutamyl-[protein] + H2O = (L-glutamyl)(n)-gamma-L-glutamyl-L-glutamyl-[protein] + L-glutamate. It catalyses the reaction C-terminal L-alpha-aminoacyl-L-glutamyl-L-glutamyl-[tubulin] + H2O = C-terminal L-alpha-aminoacyl-L-glutamyl-[tubulin] + L-glutamate. In terms of biological role, metallocarboxypeptidase that mediates protein deglutamylation of tubulin and non-tubulin target proteins. Catalyzes the removal of polyglutamate side chains present on the gamma-carboxyl group of glutamate residues within the C-terminal tail of tubulin protein. Specifically cleaves tubulin long-side-chains, while it is not able to remove the branching point glutamate. Also catalyzes the removal of polyglutamate residues from the carboxy-terminus of non-tubulin proteins such as MYLK. Mediates the deglutamylation of nucleotidyltransferase CGAS, leading to CGAS antiviral defense response activation. Involved in KLF4 deglutamylation which promotes KLF4 proteasome-mediated degradation, thereby negatively regulating cell pluripotency maintenance and embryogenesis. This is Cytosolic carboxypeptidase 6 from Homo sapiens (Human).